The sequence spans 725 residues: Catalase-peroxidase (725 aa).

The segment at residues 98–226 (WHMAGSYRTS…LAAVQMGLIY (129 aa)) is a cross-link (tryptophyl-tyrosyl-methioninium (Trp-Tyr) (with M-252)). His99 serves as the catalytic Proton acceptor. The tryptophyl-tyrosyl-methioninium (Tyr-Met) (with W-98) cross-link spans 226–252 (YVNPEGVNGKSDPQATAYQMRETFARM). Residue His267 participates in heme b binding.

This sequence belongs to the peroxidase family. Peroxidase/catalase subfamily. In terms of assembly, homodimer or homotetramer. Heme b serves as cofactor. In terms of processing, formation of the three residue Trp-Tyr-Met cross-link is important for the catalase, but not the peroxidase activity of the enzyme.

It carries out the reaction H2O2 + AH2 = A + 2 H2O. The catalysed reaction is 2 H2O2 = O2 + 2 H2O. In terms of biological role, bifunctional enzyme with both catalase and broad-spectrum peroxidase activity. This is Catalase-peroxidase from Paracoccus denitrificans (strain Pd 1222).